Here is a 949-residue protein sequence, read N- to C-terminus: Glycine dehydrogenase (decarboxylating) (949 aa).

Lysine 699 carries the post-translational modification N6-(pyridoxal phosphate)lysine.

This sequence belongs to the GcvP family. The glycine cleavage system is composed of four proteins: P, T, L and H. The cofactor is pyridoxal 5'-phosphate.

The catalysed reaction is N(6)-[(R)-lipoyl]-L-lysyl-[glycine-cleavage complex H protein] + glycine + H(+) = N(6)-[(R)-S(8)-aminomethyldihydrolipoyl]-L-lysyl-[glycine-cleavage complex H protein] + CO2. Functionally, the glycine cleavage system catalyzes the degradation of glycine. The P protein binds the alpha-amino group of glycine through its pyridoxal phosphate cofactor; CO(2) is released and the remaining methylamine moiety is then transferred to the lipoamide cofactor of the H protein. The polypeptide is Glycine dehydrogenase (decarboxylating) (Roseobacter denitrificans (strain ATCC 33942 / OCh 114) (Erythrobacter sp. (strain OCh 114))).